A 381-amino-acid polypeptide reads, in one-letter code: Transaldolase 2 (381 aa).

The active-site Schiff-base intermediate with substrate is K141.

The protein belongs to the transaldolase family. Type 2 subfamily.

It is found in the cytoplasm. It carries out the reaction D-sedoheptulose 7-phosphate + D-glyceraldehyde 3-phosphate = D-erythrose 4-phosphate + beta-D-fructose 6-phosphate. It participates in carbohydrate degradation; pentose phosphate pathway; D-glyceraldehyde 3-phosphate and beta-D-fructose 6-phosphate from D-ribose 5-phosphate and D-xylulose 5-phosphate (non-oxidative stage): step 2/3. Transaldolase is important for the balance of metabolites in the pentose-phosphate pathway. In Nostoc punctiforme (strain ATCC 29133 / PCC 73102), this protein is Transaldolase 2 (tal2).